Consider the following 56-residue polypeptide: Large ribosomal subunit protein bL32c (56 aa).

Residues 1–20 show a composition bias toward basic residues; the sequence is MAAPKKRTSKSRKNMRKSTW. The segment at 1-28 is disordered; the sequence is MAAPKKRTSKSRKNMRKSTWKRQAATQA.

Belongs to the bacterial ribosomal protein bL32 family.

Its subcellular location is the plastid. It is found in the chloroplast. The protein is Large ribosomal subunit protein bL32c (rpl32) of Mesostigma viride (Green alga).